We begin with the raw amino-acid sequence, 866 residues long: Speckle targeted PIP5K1A-regulated poly(A) polymerase (866 aa).

A Matrin-type zinc finger spans residues 16-46 (FRCCLCDVTTANRPSLDAHLKGRKHRDLVQL). The region spanning 56–128 (RSVFVSGFPR…HTLRVRPREQ (73 aa)) is the RRM domain. The disordered stretch occupies residues 116-147 (LGGHTLRVRPREQKEFQSPASKSPKGVDSNSH). An ATP-binding site is contributed by S205. The Mg(2+) site is built by D216 and D218. D216 and D218 together coordinate UTP. Disordered stretches follow at residues 223–249 (LGDM…STLA) and 267–321 (LSPT…EGKH). Residues 282-304 (TPSSLAPQTPDSALGSDTVTSPQ) show a composition bias toward polar residues. N393 serves as a coordination point for ATP. 4 residues coordinate UTP: N393, R415, Y433, and H550. The PAP-associated domain maps to 492 to 550 (LSSLLAQFFSCVSCWDLSGSLLSLREGQALMVAGGLPSDLWEGLRLGPMNLQDPFDLSH). The tract at residues 599–866 (SSPSSLLSAK…IPQALKNLLK (268 aa)) is KA1; binds the bulging loops of U6 snRNA but is dispensable for terminal uridylyltransferase activity. Disordered stretches follow at residues 638 to 687 (QGTK…DHSE), 728 to 755 (EQNP…PSSV), and 773 to 792 (RRRF…STGA). The segment covering 669 to 687 (KSCEEGKEEPQGCAGDHSE) has biased composition (basic and acidic residues). Residues S686 and S741 each carry the phosphoserine modification.

This sequence belongs to the DNA polymerase type-B-like family. In terms of assembly, associates with the cleavage and polyadenylation specificity factor (CPSF) complex. Interacts with CPSF1 and CPSF3; the interaction is direct. Interacts with PIP5K1A. Mg(2+) serves as cofactor. Mn(2+) is required as a cofactor. Phosphorylated by CK1 in the proline-rich (Pro-rich) region.

Its subcellular location is the nucleus. The protein resides in the nucleolus. It is found in the nucleus speckle. It catalyses the reaction RNA(n) + UTP = RNA(n)-3'-uridine ribonucleotide + diphosphate. It carries out the reaction RNA(n) + ATP = RNA(n)-3'-adenine ribonucleotide + diphosphate. Its activity is regulated as follows. Adenylyltransferase activity is specifically phosphatidylinositol 4,5-bisphosphate (PtdIns(4,5)P2). In terms of biological role, poly(A) polymerase that creates the 3'-poly(A) tail of specific pre-mRNAs. Localizes to nuclear speckles together with PIP5K1A and mediates polyadenylation of a select set of mRNAs, such as HMOX1. In addition to polyadenylation, it is also required for the 3'-end cleavage of pre-mRNAs: binds to the 3'UTR of targeted pre-mRNAs and promotes the recruitment and assembly of the CPSF complex on the 3'UTR of pre-mRNAs. In addition to adenylyltransferase activity, also has uridylyltransferase activity. However, the ATP ratio is higher than UTP in cells, suggesting that it functions primarily as a poly(A) polymerase. Acts as a specific terminal uridylyltransferase for U6 snRNA in vitro: responsible for a controlled elongation reaction that results in the restoration of the four 3'-terminal UMP-residues found in newly transcribed U6 snRNA. Not involved in replication-dependent histone mRNA degradation. This is Speckle targeted PIP5K1A-regulated poly(A) polymerase (Tut1) from Rattus norvegicus (Rat).